The chain runs to 515 residues: tRNA pseudouridine synthase Pus10 (515 aa).

Zn(2+) is bound by residues Cys-21 and Cys-24. The stretch at 42 to 85 forms a coiled coil; the sequence is KEVTYELQKYLSHGDPAEENDTPPSKKAKIEEDTSSNEHLGNCE. Residues 55 to 82 form a disordered region; the sequence is GDPAEENDTPPSKKAKIEEDTSSNEHLG. Positions 96 and 99 each coordinate Zn(2+). Residues 291–304 form an RNA binding forefinger loop region; it reads TPWIIDGERKIESS. Residue Asp-331 is the Nucleophile of the active site. The tract at residues 428–443 is RNA binding thumb loop; it reads QKTPLRVLHRRPLASR.

It belongs to the pseudouridine synthase Pus10 family.

The protein resides in the nucleus. Its subcellular location is the cytoplasm. It is found in the mitochondrion. It catalyses the reaction uridine(55) in tRNA = pseudouridine(55) in tRNA. The catalysed reaction is uridine(54) in tRNA = pseudouridine(54) in tRNA. Functionally, protein with different functions depending on its subcellular location: involved in miRNA processing in the nucleus and acts as a tRNA pseudouridylate synthase in the cytoplasm. In the cytoplasm, acts as a pseudouridylate synthase by catalyzing synthesis of pseudouridine(54) and pseudouridine(55) from uracil-54 and uracil-55, respectively, in the psi GC loop of a subset of tRNAs. tRNA pseudouridylate synthase activity is enhanced by the presence of 1-methyladenosine at position 53-61 of tRNAs. Does not show tRNA pseudouridylate synthase activity in the nucleus. In the nucleus, promotes primary microRNAs (pri-miRNAs) processing independently of its RNA pseudouridylate synthase activity. Binds pri-miRNAs. This chain is tRNA pseudouridine synthase Pus10, found in Xenopus laevis (African clawed frog).